The following is a 460-amino-acid chain: Decaprenylphosphoryl-beta-D-ribose oxidase (460 aa).

Residues 19–193 enclose the FAD-binding PCMH-type domain; it reads TAPTVASVLS…LRATIEMTPT (175 aa). FAD contacts are provided by residues 52-62, G116, 121-124, 128-131, I183, and Y414; these read ARGLGRSYGDN, TVGG, and CDIH.

Belongs to the DprE1 family. In terms of assembly, monomer. Interacts with DprE2 to form an epimerase complex.

It is found in the periplasm. It catalyses the reaction trans,octa-cis-decaprenylphospho-beta-D-ribofuranose + FAD + H(+) = trans,octa-cis-decaprenylphospho-beta-D-erythro-pentofuranosid-2-ulose + FADH2. It functions in the pathway cell wall biogenesis; cell wall polysaccharide biosynthesis. Is inhibited by 8-nitro-benzothiazinones (BTZs) such as BTZ043; BTZs are a new class of antimycobacterial agents that block formation of both cell-wall lipoarabinomannan and arabinogalactan via inhibition of decaprenyl-phospho-arabinose (DPA) synthesis. BTZs are suicide inhibitors that act via covalent modification of DprE1; the essential nitro group of these compounds is reduced by DprE1 to a nitroso group, which then specifically reacts with Cys-386 of DprE1 to form an irreversible semimercaptal adduct. Other compounds with diverse scaffolds (dinitrobenzamides and nitrobenzoquinoxalines) also act as covalent DprE1 inhibitors. Functionally, component of the DprE1-DprE2 complex that catalyzes the 2-step epimerization of decaprenyl-phospho-ribose (DPR) to decaprenyl-phospho-arabinose (DPA), a key precursor that serves as the arabinose donor required for the synthesis of cell-wall arabinans. DprE1 catalyzes the first step of epimerization, namely FAD-dependent oxidation of the C2' hydroxyl of DPR to yield the keto intermediate decaprenyl-phospho-2'-keto-D-arabinose (DPX). The intermediate DPX is then transferred to DprE2 subunit of the epimerase complex, most probably through a 'substrate channel' at the interface of DprE1-DprE2 complex. Can also use farnesyl-phosphoryl-beta-D-ribofuranose (FPR) as substrate in vitro. Appears to be essential for the growth of M.smegmatis. This Mycolicibacterium smegmatis (strain ATCC 700084 / mc(2)155) (Mycobacterium smegmatis) protein is Decaprenylphosphoryl-beta-D-ribose oxidase.